A 147-amino-acid polypeptide reads, in one-letter code: Small ribosomal subunit protein uS5 (147 aa).

Residues 9-72 form the S5 DRBM domain; sequence FEEVIVDIGR…DDAFKNIVEV (64 aa).

Belongs to the universal ribosomal protein uS5 family. Part of the 30S ribosomal subunit. Contacts proteins S4 and S8.

With S4 and S12 plays an important role in translational accuracy. Its function is as follows. Located at the back of the 30S subunit body where it stabilizes the conformation of the head with respect to the body. The protein is Small ribosomal subunit protein uS5 of Campylobacter fetus subsp. fetus (strain 82-40).